Reading from the N-terminus, the 355-residue chain is D-alanine--D-alanine ligase (355 aa).

Residues 143-350 (KTIFSNHKLP…IEQLVAKLVD (208 aa)) form the ATP-grasp domain. ATP is bound at residue 178-233 (LKKLKFPVFVKPSNSGSSLGISKVKNESEILLALEKAWGIDPRILIEEGLEVREIE). The Mg(2+) site is built by aspartate 303, glutamate 317, and asparagine 319.

The protein belongs to the D-alanine--D-alanine ligase family. Requires Mg(2+) as cofactor. It depends on Mn(2+) as a cofactor.

It is found in the cytoplasm. The catalysed reaction is 2 D-alanine + ATP = D-alanyl-D-alanine + ADP + phosphate + H(+). It participates in cell wall biogenesis; peptidoglycan biosynthesis. Cell wall formation. The protein is D-alanine--D-alanine ligase of Prochlorococcus marinus (strain MIT 9301).